Here is a 239-residue protein sequence, read N- to C-terminus: Superoxide dismutase [Mn] 3 (239 aa).

Residues alanine 1–threonine 19 show a composition bias toward polar residues. Positions alanine 1–proline 20 are disordered. Residues alanine 1–alanine 30 form the signal peptide. Residues histidine 57, histidine 112, aspartate 195, and histidine 199 each contribute to the Mn(2+) site.

The protein belongs to the iron/manganese superoxide dismutase family. Homodimer. The cofactor is Mn(2+).

It catalyses the reaction 2 superoxide + 2 H(+) = H2O2 + O2. Destroys superoxide anion radicals which are normally produced within the cells and which are toxic to biological systems. In Leptolyngbya boryana (Plectonema boryanum), this protein is Superoxide dismutase [Mn] 3 (sodA3).